Consider the following 407-residue polypeptide: Substance-P receptor (407 aa).

At 1-31 (MDNVLPVDSDLSPNISTNTSEPNQFVQPAWQ) the chain is on the extracellular side. 2 N-linked (GlcNAc...) asparagine glycosylation sites follow: asparagine 14 and asparagine 18. A helical transmembrane segment spans residues 32–54 (IVLWAAAYTVIVVTSVVGNVVVM). Residues 55-64 (WIILAHKRMR) are Cytoplasmic-facing. Residues 65–86 (TVTNYFLVNLAFAEASMAAFNT) traverse the membrane as a helical segment. Topologically, residues 87–106 (VVNFTYAVHNEWYYGLFYCK) are extracellular. Residues cysteine 105 and cysteine 180 are joined by a disulfide bond. The chain crosses the membrane as a helical span at residues 107-128 (FHNFFPIAAVFASIYSMTAVAF). The Cytoplasmic portion of the chain corresponds to 129–148 (DRYMAIIHPLQPRLSATATK). Residues 149-169 (VVICVIWVLALLLAFPQGYYS) form a helical membrane-spanning segment. At 170-194 (TTETMPSRVVCMIEWPEHPNKIYEK) the chain is on the extracellular side. The helical transmembrane segment at 195 to 219 (VYHICVTVLIYFLPLLVIGYAYTVV) threads the bilayer. Position 197 (histidine 197) interacts with CP-96345. Over 220–248 (GITLWASEIPGDSSDRYHEQVSAKRKVVK) the chain is Cytoplasmic. A helical transmembrane segment spans residues 249–270 (MMIVVVCTFAICWLPFHIFFLL). Residues 271–283 (PYINPDLYLKKFI) are Extracellular-facing. A helical membrane pass occupies residues 284 to 308 (QQVYLAIMWLAMSSTMYNPIIYCCL). The Cytoplasmic portion of the chain corresponds to 309 to 407 (NDRFRLGFKH…SFSFSSNVLS (99 aa)). Cysteine 322 is lipidated: S-palmitoyl cysteine. The segment at 364–407 (AHEEEPEDGPKATPSSLDLTSNCSSRSDSKTMTESFSFSSNVLS) is disordered. Over residues 376-407 (TPSSLDLTSNCSSRSDSKTMTESFSFSSNVLS) the composition is skewed to polar residues.

Belongs to the G-protein coupled receptor 1 family. As to quaternary structure, interacts with ARRB1.

Its subcellular location is the cell membrane. Functionally, this is a receptor for the tachykinin neuropeptide substance P. It is probably associated with G proteins that activate a phosphatidylinositol-calcium second messenger system. The rank order of affinity of this receptor to tachykinins is: substance P &gt; substance K &gt; neuromedin-K. This is Substance-P receptor (TACR1) from Homo sapiens (Human).